The sequence spans 212 residues: Imidazole glycerol phosphate synthase subunit HisH (212 aa).

Positions K2 to V212 constitute a Glutamine amidotransferase type-1 domain. The active-site Nucleophile is C82. Residues H190 and E192 contribute to the active site.

Heterodimer of HisH and HisF.

Its subcellular location is the cytoplasm. The enzyme catalyses 5-[(5-phospho-1-deoxy-D-ribulos-1-ylimino)methylamino]-1-(5-phospho-beta-D-ribosyl)imidazole-4-carboxamide + L-glutamine = D-erythro-1-(imidazol-4-yl)glycerol 3-phosphate + 5-amino-1-(5-phospho-beta-D-ribosyl)imidazole-4-carboxamide + L-glutamate + H(+). It carries out the reaction L-glutamine + H2O = L-glutamate + NH4(+). The protein operates within amino-acid biosynthesis; L-histidine biosynthesis; L-histidine from 5-phospho-alpha-D-ribose 1-diphosphate: step 5/9. Functionally, IGPS catalyzes the conversion of PRFAR and glutamine to IGP, AICAR and glutamate. The HisH subunit catalyzes the hydrolysis of glutamine to glutamate and ammonia as part of the synthesis of IGP and AICAR. The resulting ammonia molecule is channeled to the active site of HisF. The protein is Imidazole glycerol phosphate synthase subunit HisH of Chromobacterium violaceum (strain ATCC 12472 / DSM 30191 / JCM 1249 / CCUG 213 / NBRC 12614 / NCIMB 9131 / NCTC 9757 / MK).